The following is a 360-amino-acid chain: Phospho-N-acetylmuramoyl-pentapeptide-transferase (360 aa).

Helical transmembrane passes span 25–45 (RGIL…PWMI), 73–93 (TMGG…WADL), 97–117 (YVWV…VDDY), 135–155 (FWQS…APSA), 170–190 (IPLG…SSNA), 199–219 (GLAI…CYLS), 236–256 (AGEL…FLWF), 263–283 (VFMG…MAVI), 288–308 (IVLF…VIQV), and 338–358 (VIVR…ATLK).

Belongs to the glycosyltransferase 4 family. MraY subfamily. Mg(2+) serves as cofactor.

Its subcellular location is the cell inner membrane. The catalysed reaction is UDP-N-acetyl-alpha-D-muramoyl-L-alanyl-gamma-D-glutamyl-meso-2,6-diaminopimeloyl-D-alanyl-D-alanine + di-trans,octa-cis-undecaprenyl phosphate = di-trans,octa-cis-undecaprenyl diphospho-N-acetyl-alpha-D-muramoyl-L-alanyl-D-glutamyl-meso-2,6-diaminopimeloyl-D-alanyl-D-alanine + UMP. The protein operates within cell wall biogenesis; peptidoglycan biosynthesis. Its function is as follows. Catalyzes the initial step of the lipid cycle reactions in the biosynthesis of the cell wall peptidoglycan: transfers peptidoglycan precursor phospho-MurNAc-pentapeptide from UDP-MurNAc-pentapeptide onto the lipid carrier undecaprenyl phosphate, yielding undecaprenyl-pyrophosphoryl-MurNAc-pentapeptide, known as lipid I. In Pseudomonas savastanoi pv. phaseolicola (strain 1448A / Race 6) (Pseudomonas syringae pv. phaseolicola (strain 1448A / Race 6)), this protein is Phospho-N-acetylmuramoyl-pentapeptide-transferase.